The primary structure comprises 692 residues: Elongation factor G (692 aa).

One can recognise a tr-type G domain in the interval 8–282 (EKTRNIGIMA…AIVDYLPAPT (275 aa)). GTP contacts are provided by residues 17-24 (AHIDAGKT), 81-85 (DTPGH), and 135-138 (NKMD).

It belongs to the TRAFAC class translation factor GTPase superfamily. Classic translation factor GTPase family. EF-G/EF-2 subfamily.

The protein localises to the cytoplasm. In terms of biological role, catalyzes the GTP-dependent ribosomal translocation step during translation elongation. During this step, the ribosome changes from the pre-translocational (PRE) to the post-translocational (POST) state as the newly formed A-site-bound peptidyl-tRNA and P-site-bound deacylated tRNA move to the P and E sites, respectively. Catalyzes the coordinated movement of the two tRNA molecules, the mRNA and conformational changes in the ribosome. This Pelotomaculum thermopropionicum (strain DSM 13744 / JCM 10971 / SI) protein is Elongation factor G.